Reading from the N-terminus, the 578-residue chain is Isocitrate dehydrogenase kinase/phosphatase (578 aa).

Residues 315 to 321 (APGIRGM) and Lys336 contribute to the ATP site. Asp371 is a catalytic residue.

It belongs to the AceK family.

Its subcellular location is the cytoplasm. It carries out the reaction L-seryl-[isocitrate dehydrogenase] + ATP = O-phospho-L-seryl-[isocitrate dehydrogenase] + ADP + H(+). In terms of biological role, bifunctional enzyme which can phosphorylate or dephosphorylate isocitrate dehydrogenase (IDH) on a specific serine residue. This is a regulatory mechanism which enables bacteria to bypass the Krebs cycle via the glyoxylate shunt in response to the source of carbon. When bacteria are grown on glucose, IDH is fully active and unphosphorylated, but when grown on acetate or ethanol, the activity of IDH declines drastically concomitant with its phosphorylation. The protein is Isocitrate dehydrogenase kinase/phosphatase of Shigella boydii serotype 18 (strain CDC 3083-94 / BS512).